A 160-amino-acid polypeptide reads, in one-letter code: Ribosome maturation factor RimP (160 aa).

This sequence belongs to the RimP family.

Its subcellular location is the cytoplasm. Its function is as follows. Required for maturation of 30S ribosomal subunits. The polypeptide is Ribosome maturation factor RimP (Syntrophus aciditrophicus (strain SB)).